The chain runs to 61 residues: Truncated Cytokine response-modifying protein B (61 aa).

The protein is truncated in this strain and presumably inactive. It has similarities with variola virus CrmB, but the product is inactivated due to several premature stop codon. This Bos taurus (Bovine) protein is Truncated Cytokine response-modifying protein B.